The chain runs to 1698 residues: METQNHLSCTGQTPLTNASGLKLLPQSVEPVYTNSTLTSFSQHGKVLNYDLPVNGLISPSLSNNAHGTLLSNEHITHNSASNNFDYLWKKPKSSVHKDSHVSNQFLVNGSTCPITNGPSIKRSPQETLGNCTSNQTASFNVSSHSVCSPNEANVKMVTAANGAHYGFYEASLPVSVSASNMQSVSGDNLVKERTVEENEAGATEERNHTPELAEALEPSDTQTDLNICEYKESVLDPVIQSTPNPLLPPDVSNLDDPSQLPSQLGDSHLLNEDSLEPFGADLIQDPISSTMYDLEELEVGSTKQKDPQLDTSSLDCPTYSLSAAFPLVAEDTNDSSVLFNASSASPVLGDSVMQESASEMGEDPEGSKAEEPVSGPENVSQDEMTIENTSPEPCVAAEHEEEELEPGEVKGTISRRRIATPEQVCFPLQHGWRREVRIKKGSHRWQGETWYYAPCGKRMKQFPEVIKYLSKNAGPFVRREHFSFSPRMPVGDFYEERNTAEGLQWVLLNSEEIPSRIIAITGKRGRPRNLEKAKAKEQKAKRGRGRPPKVKMIDLLSKADAKLLRKLENQDILSDSEKVQLCKLKKKMRRKARNQEAKLEAAKKLKEIKEKEEKKQKIQKAKNQEKAKNQEKKRTRRQPKQKAPVVQKPDRKLLAQQRRLEERKRQQFILEELKKPTEDMCLPDHQQLPDFPCVPGLFLPSCAFSDCLTTVEFLHSYGKVLGLDEAKDIPSLCTLQEGLFNVGDSLGEVQDLLVKLLQAAMINPGLPPYCQSLKILGEKVSEIVLSRENVSEPLRIFLEAYGGDIELCDSLRSHPFQAHAPHIKTAILAFIVNELNASSLIISEIDKTLENMSHYRKHKWIIEGKIRRLKFALSKRKSSEESQITTTEVSLRRRSERNAEENDELDSIDESAIQKDYVQEEVDIPPSTSVVELERQIEKLTKRQMFFRKKILGSSQRLRTVCLGQDRYRRCYWMLPHLGGIFIEGLPESAEPTEEAALGNDIEASSVKTEDKSFGSLCKTSGHPRNSTAEPEQNSTSCHCSDSKDKEPSGVTDQFPNSVPLTNNQQDLSQSVFLSWLTKNQTSIMDSTVLTPESSPPHSESTPIISSEATEKPEQWLPLISRTPCRNHNQGLSTHSSNRLSPPSPTAATSVKQVNEFTEEAQTFATSLPSNSTPCHVCYNSGKSSTASHEITLTSNILHDSEKEKRRGRRPSKLLKQIEQKYYNQLIERPIPAGVRQKWWWIKDPAMLESLLKALHPRGIREKTLHKHLTKHLQHLKEMCARPASDALFKFTPVDGHRVSQETLDRWSVTDLTFQVDLSALQWVEDLEQRVMLSDLQQRGWSPSAPDSVRTDLKYYEHQLEPADDITVKVKREDCRLYRESSNPLDLAVLRILCLEENVERKYLKEPLWLFSEVQHEKVVITNPEDPLSTTEIEYSITSRLRLWRQTVERCRSAAQLSLCLQQLERSIAWERSLNKVTCLYCRKGDNDELLLLCDSCDRGCHTYCHRPRMNEIPEGDWFCPTCISLQSESEFLRSSGSSKRIRKCTVRFTEDSPSKPSRRREHPTASQFSPGESPASKKRRMGTRSQSPDLTFCEIILMELESHEDAWPFLEPVNPRLVPGYRKIIKNPMDFSTMRHKLLNGNYSRCEEFAEDAELIFSNCQLFNEDESDVGKAGLILKKFYDARWEEFSQERNQISL.

Disordered stretches follow at residues 240–262 (QSTP…QLPS) and 352–387 (VMQE…MTIE). Over residues 377-387 (ENVSQDEMTIE) the composition is skewed to polar residues. In terms of domain architecture, MBD spans 418-489 (IATPEQVCFP…EHFSFSPRMP (72 aa)). Disordered stretches follow at residues 524–550 (RGRP…PPKV) and 610–653 (EKEE…DRKL). Basic and acidic residues predominate over residues 528–540 (RNLEKAKAKEQKA). Positions 541–553 (KRGRGRPPKVKMI) form a DNA-binding region, a.T hook 1. Residues 579–638 (VQLCKLKKKMRRKARNQEAKLEAAKKLKEIKEKEEKKQKIQKAKNQEKAKNQEKKRTRRQ) adopt a coiled-coil conformation. The segment covering 610 to 632 (EKEEKKQKIQKAKNQEKAKNQEK) has biased composition (basic and acidic residues). The DDT domain maps to 701–766 (SCAFSDCLTT…LQAAMINPGL (66 aa)). Disordered stretches follow at residues 884–905 (ITTT…NDEL), 1013–1063 (SFGS…PLTN), 1088–1110 (TVLT…SEAT), and 1123–1149 (TPCR…TAAT). Over residues 890–900 (SLRRRSERNAE) the composition is skewed to basic and acidic residues. Composition is skewed to polar residues over residues 1023-1040 (HPRN…SCHC) and 1051-1063 (VTDQ…PLTN). Residues 1091 to 1108 (TPESSPPHSESTPIISSE) are compositionally biased toward low complexity. Polar residues predominate over residues 1124–1149 (PCRNHNQGLSTHSSNRLSPPSPTAAT). Residues 1204-1216 (EKRRGRRPSKLLK) constitute a DNA-binding region (a.T hook 3). The segment at 1476 to 1526 (KVTCLYCRKGDNDELLLLCDSCDRGCHTYCHRPRMNEIPEGDWFCPTCISL) adopts a PHD-type zinc-finger fold. Residues 1549 to 1587 (FTEDSPSKPSRRREHPTASQFSPGESPASKKRRMGTRSQ) are disordered. Positions 1585-1689 (RSQSPDLTFC…KFYDARWEEF (105 aa)) constitute a Bromo domain.

This sequence belongs to the WAL family. As to quaternary structure, component of the NoRC complex, at least composed of SMARCA5/SNF2H and BAZ2A/TIP5.

The protein resides in the nucleus. Its subcellular location is the nucleolus. Functionally, essential component of the NoRC (nucleolar remodeling complex) complex, a complex that mediates silencing of a fraction of rDNA by recruiting histone-modifying enzymes and DNA methyltransferases, leading to heterochromatin formation and transcriptional silencing. In the complex, it plays a central role by being recruited to rDNA and by targeting chromatin modifying enzymes such as HDAC1, leading to repress RNA polymerase I transcription. Recruited to rDNA via its interaction with TTF1 and its ability to recognize and bind histone H4 acetylated on 'Lys-16' (H4K16ac), leading to deacetylation of H4K5ac, H4K8ac, H4K12ac but not H4K16ac. Specifically binds pRNAs, 150-250 nucleotide RNAs that are complementary in sequence to the rDNA promoter; pRNA-binding is required for heterochromatin formation and rDNA silencing. The chain is Bromodomain adjacent to zinc finger domain protein 2A (baz2a) from Xenopus laevis (African clawed frog).